The following is a 55-amino-acid chain: Mitochondrial import receptor subunit TOM7 homolog (55 aa).

At methionine 1 to glutamine 20 the chain is on the cytoplasmic side. Residues phenylalanine 21–alanine 40 traverse the membrane as a helical segment. The Mitochondrial intermembrane segment spans residues aspartate 41–glycine 55.

It belongs to the Tom7 family. As to quaternary structure, forms part of the preprotein translocase complex of the outer mitochondrial membrane (TOM complex) which consists of at least 7 different proteins (TOMM5, TOMM6, TOMM7, TOMM20, TOMM22, TOMM40 and TOMM70).

Its subcellular location is the mitochondrion outer membrane. Functionally, required for assembly and stability of the TOM complex. Positive regulator of PRKN translocation to damaged mitochondria. Acts probably by stabilizing PINK1 on the outer membrane of depolarized mitochondria. In Mus musculus (Mouse), this protein is Mitochondrial import receptor subunit TOM7 homolog (Tomm7).